The following is a 214-amino-acid chain: NADH-ubiquinone oxidoreductase chain 5 (214 aa).

The next 4 helical transmembrane spans lie at 14–34 (LNTWALLLTLMATAFTATYSI), 58–78 (PLITAPLTRLALGSITAGMII), 92–112 (MPLITKTAAILMTILGIILAL), and 192–212 (TGLIKAYLGSFALSILVMILM).

It belongs to the complex I subunit 5 family.

Its subcellular location is the mitochondrion inner membrane. It catalyses the reaction a ubiquinone + NADH + 5 H(+)(in) = a ubiquinol + NAD(+) + 4 H(+)(out). Core subunit of the mitochondrial membrane respiratory chain NADH dehydrogenase (Complex I) that is believed to belong to the minimal assembly required for catalysis. Complex I functions in the transfer of electrons from NADH to the respiratory chain. The immediate electron acceptor for the enzyme is believed to be ubiquinone. The polypeptide is NADH-ubiquinone oxidoreductase chain 5 (MT-ND5) (Anser caerulescens (Snow goose)).